The following is a 314-amino-acid chain: Olfactory receptor 9A1 (314 aa).

Residues 1 to 24 lie on the Extracellular side of the membrane; sequence MLGNYSSATEFFLLGFPGSQEVCR. N-linked (GlcNAc...) asparagine glycosylation occurs at Asn-4. The chain crosses the membrane as a helical span at residues 25-45; that stretch reads ILFATFFLLYAVTVMGNVVII. Residues 46-64 lie on the Cytoplasmic side of the membrane; sequence ITVCVDKCLQSPIYFFLGH. The helical transmembrane segment at 65 to 85 threads the bilayer; it reads LCVLEILITSTAVPFMLWGLL. Residues 86–99 are Extracellular-facing; it reads LPSTQIMSLTACAA. A disulfide bridge links Cys-97 with Cys-179. A helical transmembrane segment spans residues 100 to 120; sequence QLYLYLSLGTLELALMGVMAV. Topologically, residues 121 to 140 are cytoplasmic; that stretch reads DRYVAVCNPLRYNIIMNSST. The chain crosses the membrane as a helical span at residues 141–161; the sequence is FIWVIIVSWVLGFLSEIWPVY. Residues 162-196 lie on the Extracellular side of the membrane; it reads ATFQLTFCKSSVLDHFYCDRGQLLKVSCEDTLFRE. A helical transmembrane segment spans residues 197-217; that stretch reads FILFLMAVFIIIGSLIPTIVS. The Cytoplasmic portion of the chain corresponds to 218-239; sequence YTYIISTNLKIPSASGWRKSFS. The chain crosses the membrane as a helical span at residues 240-260; sequence TCASHFTYVVIGYGSCLFLYV. The Extracellular portion of the chain corresponds to 261–271; the sequence is KPKQTQAAEYN. The helical transmembrane segment at 272-292 threads the bilayer; that stretch reads RVVSLLVLVVTPFLNPFIFTL. Residues 293 to 314 lie on the Cytoplasmic side of the membrane; the sequence is RNDKFIQAFGDGMKHCYKLLKN.

It belongs to the G-protein coupled receptor 1 family.

Its subcellular location is the cell membrane. In terms of biological role, odorant receptor. The polypeptide is Olfactory receptor 9A1 (OR9A1P) (Homo sapiens (Human)).